The primary structure comprises 318 residues: MSRPIILDCDPGHDDAIALILALAHPELNPLAVTTSAGNQTPDKTLKNALRILTLLNRSDIPVAGGAVKPLSRELMIADNVHGETGLDGPALPAPSFQPQAVNAVELMAEKIRQSDKPVTLVPTGPLTNIALLLASHGELHAKIERIVLMGGAAGVGNWTPAAEFNIFVDPEAADIVFKSGIPITMCGLDVTHQAQIMDEDIERIRAIPNPVAKCVAELLDFFMIYHRAPKWGFVGAPLHDPCTIAWLLNPALFDAQDCWVGIETQSELTLGMTVVDRYQLTGKPTNATVLFGIDRQGFVDLLVDSLAVYTPTYLNRR.

Residue histidine 240 is part of the active site.

The protein belongs to the IUNH family. RihA subfamily.

In terms of biological role, hydrolyzes cytidine or uridine to ribose and cytosine or uracil, respectively. The chain is Pyrimidine-specific ribonucleoside hydrolase RihA from Shewanella sp. (strain MR-7).